A 108-amino-acid chain; its full sequence is Large ribosomal subunit protein uL23 (108 aa).

It belongs to the universal ribosomal protein uL23 family. As to quaternary structure, part of the 50S ribosomal subunit. Contacts protein L29, and trigger factor when it is bound to the ribosome.

In terms of biological role, one of the early assembly proteins it binds 23S rRNA. One of the proteins that surrounds the polypeptide exit tunnel on the outside of the ribosome. Forms the main docking site for trigger factor binding to the ribosome. The chain is Large ribosomal subunit protein uL23 from Polaromonas sp. (strain JS666 / ATCC BAA-500).